The sequence spans 263 residues: Endonuclease 8 (263 aa).

Pro2 serves as the catalytic Schiff-base intermediate with DNA. Catalysis depends on Glu3, which acts as the Proton donor. Catalysis depends on Lys53, which acts as the Proton donor; for beta-elimination activity. Residues Gln70, Arg125, and Asn169 each coordinate DNA. Residues 229–263 form an FPG-type zinc finger; that stretch reads KVFHRDGEPCERCGSIIEKTTLSSRPFYWCPGCQH. The active-site Proton donor; for delta-elimination activity is Arg253.

The protein belongs to the FPG family. Zn(2+) serves as cofactor.

It carries out the reaction 2'-deoxyribonucleotide-(2'-deoxyribose 5'-phosphate)-2'-deoxyribonucleotide-DNA = a 3'-end 2'-deoxyribonucleotide-(2,3-dehydro-2,3-deoxyribose 5'-phosphate)-DNA + a 5'-end 5'-phospho-2'-deoxyribonucleoside-DNA + H(+). Involved in base excision repair of DNA damaged by oxidation or by mutagenic agents. Acts as a DNA glycosylase that recognizes and removes damaged bases. Has a preference for oxidized pyrimidines, such as thymine glycol, 5,6-dihydrouracil and 5,6-dihydrothymine. Has AP (apurinic/apyrimidinic) lyase activity and introduces nicks in the DNA strand. Cleaves the DNA backbone by beta-delta elimination to generate a single-strand break at the site of the removed base with both 3'- and 5'-phosphates. The chain is Endonuclease 8 from Escherichia coli O17:K52:H18 (strain UMN026 / ExPEC).